Here is a 515-residue protein sequence, read N- to C-terminus: Galactokinase (515 aa).

Residues Arg48, Asp54, His55, and Asp57 each coordinate alpha-D-galactose. ATP contacts are provided by Gly155, Gly157, Ser159, and Ser160. Asp205 provides a ligand contact to alpha-D-galactose. Asp205 acts as the Proton acceptor in catalysis. ATP is bound by residues Ser249, Asn250, and Lys251. Tyr259 contributes to the alpha-D-galactose binding site.

This sequence belongs to the GHMP kinase family. GalK subfamily.

It catalyses the reaction alpha-D-galactose + ATP = alpha-D-galactose 1-phosphate + ADP + H(+). Its pathway is carbohydrate metabolism; galactose metabolism. In terms of biological role, galactokinase is a key enzyme in the galactose metabolism where it catalyzes the conversion of alpha-D-galactose to galactose 1-phosphate. Can also induce the transcription of the gal genes in response to the organism being challenged with galactose as the sole source of carbon. The chain is Galactokinase from Candida albicans (Yeast).